A 412-amino-acid polypeptide reads, in one-letter code: Hyaluronidase-3 (412 aa).

A signal peptide spans 1–22; the sequence is MIMHLGLMMVVGLTLCLMHGQA. 5 disulfides stabilise this stretch: Cys-42–Cys-332, Cys-206–Cys-221, Cys-357–Cys-368, Cys-362–Cys-396, and Cys-398–Cys-407. N-linked (GlcNAc...) asparagine glycosylation is present at Asn-69. The Proton donor role is filled by Glu-129. N-linked (GlcNAc...) asparagine glycosylation is present at Asn-216. The 56-residue stretch at 353 to 408 folds into the EGF-like domain; that stretch reads AAMACSHQRCHGHGRCARKDPGQMEAFLHLQPDDSLGAWNSFRCHCYSGWAGPTCL.

Belongs to the glycosyl hydrolase 56 family. In terms of processing, N-glycosylated. As to expression, expressed in testis, epididymal tissue, epididymal luminal fluid (ELF), acrosome-intact (AI) sperm and caput (CAP), corpus (COR) and caudal (CAU) sperm. Higher expression in sperm than testis (at protein level). Liver, kidney, skin, brain, stomach and testis. Expressed mainly in granulosa cells of the ovaries. Expressed in small and large antral follicles. Not present in theca or stroma cells. Expressed in testis and liver. Expressed in testis and CAP, COR, and CAU epididymis tissue.

The protein localises to the secreted. Its subcellular location is the cell membrane. It is found in the cytoplasmic vesicle. The protein resides in the secretory vesicle. It localises to the acrosome. The protein localises to the endoplasmic reticulum. Its subcellular location is the early endosome. It carries out the reaction Random hydrolysis of (1-&gt;4)-linkages between N-acetyl-beta-D-glucosamine and D-glucuronate residues in hyaluronate.. In terms of biological role, facilitates sperm penetration into the layer of cumulus cells surrounding the egg by digesting hyaluronic acid. Involved in induction of the acrosome reaction in the sperm. Involved in follicular atresia, the breakdown of immature ovarian follicles that are not selected to ovulate. Induces ovarian granulosa cell apoptosis, possibly via apoptotic signaling pathway involving CASP8 and CASP3 activation, and poly(ADP-ribose) polymerase (PARP) cleavage. Has no hyaluronidase activity in embryonic fibroblasts in vitro. Has no hyaluronidase activity in granulosa cells in vitro. The polypeptide is Hyaluronidase-3 (Hyal3) (Mus musculus (Mouse)).